The following is a 591-amino-acid chain: V-type ATP synthase alpha chain (591 aa).

233–240 is a binding site for ATP; sequence GPFGAGKT.

The protein belongs to the ATPase alpha/beta chains family.

The enzyme catalyses ATP + H2O + 4 H(+)(in) = ADP + phosphate + 5 H(+)(out). In terms of biological role, produces ATP from ADP in the presence of a proton gradient across the membrane. The V-type alpha chain is a catalytic subunit. The sequence is that of V-type ATP synthase alpha chain from Streptococcus pyogenes serotype M1.